We begin with the raw amino-acid sequence, 241 residues long: Tetrahydromethanopterin S-methyltransferase subunit A (241 aa).

Topologically, residues 1-220 (MANKREPAPG…AKWQAGYYNG (220 aa)) are cytoplasmic. Histidine 85 is a binding site for 5-hydroxybenzimidazolylcob(I)amide. Residues 221–241 (KIQGIATGLFLMLLIMGILMF) form a helical membrane-spanning segment.

The protein belongs to the MtrA family. The complex is composed of 8 subunits; MtrA, MtrB, MtrC, MtrD, MtrE, MtrF, MtrG and MtrH. Requires 5-hydroxybenzimidazolylcob(I)amide as cofactor.

The protein resides in the cell membrane. It carries out the reaction 5-methyl-5,6,7,8-tetrahydromethanopterin + coenzyme M + 2 Na(+)(in) = 5,6,7,8-tetrahydromethanopterin + methyl-coenzyme M + 2 Na(+)(out). The protein operates within one-carbon metabolism; methanogenesis from CO(2); methyl-coenzyme M from 5,10-methylene-5,6,7,8-tetrahydromethanopterin: step 2/2. Functionally, part of a complex that catalyzes the formation of methyl-coenzyme M and tetrahydromethanopterin from coenzyme M and methyl-tetrahydromethanopterin. This is an energy-conserving, sodium-ion translocating step. The polypeptide is Tetrahydromethanopterin S-methyltransferase subunit A (Methanocaldococcus jannaschii (strain ATCC 43067 / DSM 2661 / JAL-1 / JCM 10045 / NBRC 100440) (Methanococcus jannaschii)).